Consider the following 512-residue polypeptide: Lysine--tRNA ligase (512 aa).

2 residues coordinate Mg(2+): Glu-408 and Glu-415.

The protein belongs to the class-II aminoacyl-tRNA synthetase family. In terms of assembly, homodimer. Mg(2+) is required as a cofactor.

Its subcellular location is the cytoplasm. It carries out the reaction tRNA(Lys) + L-lysine + ATP = L-lysyl-tRNA(Lys) + AMP + diphosphate. This chain is Lysine--tRNA ligase, found in Prochlorococcus marinus subsp. pastoris (strain CCMP1986 / NIES-2087 / MED4).